The primary structure comprises 492 residues: Dipeptide permease D (492 aa).

The next 13 membrane-spanning stretches (helical) occupy residues 14-34 (VVALQIWEYFSFYGMRALLIL), 49-69 (ALFSAYCSLVYVTPILGGYLA), 91-111 (LVLGASETAPVFLYLSLAIIV), 138-158 (GGFSLMYAAGNIGSIIAPIAC), 167-187 (WAMGFALAAIGMVAGLVIFLC), 212-232 (NWGWLLVLLVTAPLLIAVLFW), 236-256 (SVYALIVATVIGLAVLARIYL), 269-289 (LIVVLTAFSLLFWAFAQQGGS), 312-332 (MFQSVNAFAVMLCGMVLAWLV), 344-364 (IWGKFALGLGLMSAGFCILTL), 379-399 (LMVLGLAVMGFAELFIDPVAM), 413-433 (VLTGIYMLLSGAIANYLAGVI), and 458-478 (VFSQITWGALACVGVVLVIWL).

It belongs to the major facilitator superfamily. Proton-dependent oligopeptide transporter (POT/PTR) (TC 2.A.17) family. DtpD subfamily.

The protein resides in the cell inner membrane. Functionally, probable proton-dependent permease that transports dipeptides. The protein is Dipeptide permease D of Klebsiella pneumoniae (strain 342).